A 102-amino-acid chain; its full sequence is uncharacterized protein (102 aa).

Residues 1–21 (MAESVNENNNNAGDSNGSGRT) are disordered. N-linked (GlcNAc...) asparagine glycosylation occurs at asparagine 16. The chain crosses the membrane as a helical span at residues 24-44 (NTIVTIVVVVIVVTLIIILAT). The segment at 49–102 (IGGSGKKVGAEEPATKLSSKSDDRNGGPNKKSPAKGSSKDDNNTEESVQSNLYG) is disordered. Basic and acidic residues predominate over residues 56–73 (VGAEEPATKLSSKSDDRN). Asparagine 90 carries N-linked (GlcNAc...) asparagine glycosylation. The segment covering 93–102 (EESVQSNLYG) has biased composition (polar residues).

The protein resides in the membrane. This is an uncharacterized protein from Encephalitozoon cuniculi (strain GB-M1) (Microsporidian parasite).